Here is a 420-residue protein sequence, read N- to C-terminus: Phosphoribosylamine--glycine ligase (420 aa).

In terms of domain architecture, ATP-grasp spans 108-314; it reads KQFMEKYAIP…FAALIAALLN (207 aa). 134-195 contributes to the ATP binding site; that stretch reads LDERGVPIVI…EDFLAGEEFS (62 aa). Residues glutamate 284 and asparagine 286 each contribute to the Mg(2+) site.

The protein belongs to the GARS family. The cofactor is Mg(2+). Mn(2+) serves as cofactor.

It carries out the reaction 5-phospho-beta-D-ribosylamine + glycine + ATP = N(1)-(5-phospho-beta-D-ribosyl)glycinamide + ADP + phosphate + H(+). It participates in purine metabolism; IMP biosynthesis via de novo pathway; N(1)-(5-phospho-D-ribosyl)glycinamide from 5-phospho-alpha-D-ribose 1-diphosphate: step 2/2. The polypeptide is Phosphoribosylamine--glycine ligase (Listeria innocua serovar 6a (strain ATCC BAA-680 / CLIP 11262)).